Here is a 431-residue protein sequence, read N- to C-terminus: Trigger factor (431 aa).

The PPIase FKBP-type domain maps to 161–245; that stretch reads TDIVIGDVQK…VKEIKRMELP (85 aa).

The protein belongs to the FKBP-type PPIase family. Tig subfamily.

The protein localises to the cytoplasm. The catalysed reaction is [protein]-peptidylproline (omega=180) = [protein]-peptidylproline (omega=0). In terms of biological role, involved in protein export. Acts as a chaperone by maintaining the newly synthesized protein in an open conformation. Functions as a peptidyl-prolyl cis-trans isomerase. The sequence is that of Trigger factor from Chloroherpeton thalassium (strain ATCC 35110 / GB-78).